Here is a 244-residue protein sequence, read N- to C-terminus: NAD(P)H-hydrate epimerase (244 aa).

The region spanning 35–240 (IREIDSLAME…SIGVPLELLR (206 aa)) is the YjeF N-terminal domain. 82-86 (NNGGD) contacts (6S)-NADPHX. The K(+) site is built by asparagine 83 and aspartate 150. (6S)-NADPHX contacts are provided by residues 154-160 (GTGAKPP), tyrosine 165, and aspartate 183. Threonine 186 contacts K(+).

This sequence belongs to the NnrE/AIBP family. K(+) is required as a cofactor.

It carries out the reaction (6R)-NADHX = (6S)-NADHX. The catalysed reaction is (6R)-NADPHX = (6S)-NADPHX. In terms of biological role, catalyzes the epimerization of the S- and R-forms of NAD(P)HX, a damaged form of NAD(P)H that is a result of enzymatic or heat-dependent hydration. This is a prerequisite for the S-specific NAD(P)H-hydrate dehydratase to allow the repair of both epimers of NAD(P)HX. This chain is NAD(P)H-hydrate epimerase, found in Rhodopirellula baltica (strain DSM 10527 / NCIMB 13988 / SH1).